Here is a 430-residue protein sequence, read N- to C-terminus: MVNIVVVGLQWGDEGKGKVVDWLSTNADAVVRFQGGNNAGHTIVINDKVYKLNLLPSSVLQNNKLSIIGNGVVLDPYALVSEIDNLKSSGINITTQNLAISESCPLVLSVHKQADILFEQLRQDTIGTTNKGIGPCYADKISRRAIRVCDLLDTKDLLYSKVNHLLIYHNLLRKSLNTPPIKAEDIVNELLNIAPKILPFVQPVWKTIYNLTQQNKTIIFEGAQGTFLDIDHGTYPFVTSSNTIASQAWVGCGINPSNKSYILGLVKAYTTRVGNGPFFTEQNNDIGKIMFKTGKELGTVSNRKRRCGWFDAVLARQAIMLSGVSGLVMTKLDVLDQFSEIKICVKYKYGDKTYDYLPASPHIQSNLEPIYEILPGWQTSTFGSVSYKDLPQNAILYIKKIEEILKVPIHLISTGPERNSMIILNNDFLQ.

GTP-binding positions include 12 to 18 (GDEGKGK) and 40 to 42 (GHT). The active-site Proton acceptor is Asp-13. Positions 13 and 40 each coordinate Mg(2+). IMP-binding positions include 13–16 (DEGK), 38–41 (NAGH), Thr-129, Arg-143, Gln-224, Thr-239, and Arg-303. The Proton donor role is filled by His-41. 299–305 (TVSNRKR) provides a ligand contact to substrate. GTP contacts are provided by residues Arg-305, 331–333 (KLD), and 413–415 (STG).

This sequence belongs to the adenylosuccinate synthetase family. In terms of assembly, homodimer. Mg(2+) is required as a cofactor.

It localises to the cytoplasm. It catalyses the reaction IMP + L-aspartate + GTP = N(6)-(1,2-dicarboxyethyl)-AMP + GDP + phosphate + 2 H(+). It functions in the pathway purine metabolism; AMP biosynthesis via de novo pathway; AMP from IMP: step 1/2. Its function is as follows. Plays an important role in the de novo pathway of purine nucleotide biosynthesis. Catalyzes the first committed step in the biosynthesis of AMP from IMP. In Ehrlichia chaffeensis (strain ATCC CRL-10679 / Arkansas), this protein is Adenylosuccinate synthetase.